The following is a 433-amino-acid chain: MRSHGQQISDRLTVEVDCHSLGPSECPSMTSSFSPLDSPTPTPTSLYSQGSMASPGWPEPSHYHHGLPMERRTSATPLRSAFRMADLTSGEGMMNMPCGNMDRQEQMPLPDYLPGYDENVDQLWIPQDMPKTYQEPQFPYQASMPQYNQMARNYYHRPQQAGYLPESASNPCLSRPIFTQSTERMPNSASMSNMLGWMPSHESLVPQTITPAQVQPFPSGPVTPPSSSYSDFPANIPTFKTHTPSTPHRSVSMGTPSGSDTPVSRMSGHNDYQEDFQLSPVYREGMMQRHRQPSRKSSKKQLLRSNLSLENLPSIIKQVQFKCKEPGCKGRFKRQEHLKRHMKSHSKEKPHVCWIPGCHRAFSRSDNLNAHYTKTHSKRGGRNRYVATLDETSQDFDPDFRGQLTPDGRPIYGSKLEDTMPDCGELSVDGWDD.

Disordered stretches follow at residues 23-64 (PSEC…SHYH) and 240-265 (KTHT…PVSR). Residues 30 to 48 (TSSFSPLDSPTPTPTSLYS) are compositionally biased toward low complexity. Polar residues predominate over residues 240-264 (KTHTPSTPHRSVSMGTPSGSDTPVS). 2 consecutive C2H2-type zinc fingers follow at residues 321–345 (FKCK…MKSH) and 351–376 (HVCW…TKTH). Positions 391–416 (ETSQDFDPDFRGQLTPDGRPIYGSKL) are disordered.

Its subcellular location is the nucleus. In terms of biological role, brlA, abaA and wetA are pivotal regulators of conidiophore development and conidium maturation. They act individually and together to regulate their own expression and that of numerous other sporulation-specific genes. Binds promoters of target genes at brlA response elements (BREs) containing the conserved sequence 5'-(C/A)(A/G)AGGG(G/A)-3'. Is not required for penicillin V production. The protein is C2H2 type master regulator of conidiophore development brlA of Penicillium rubens (strain ATCC 28089 / DSM 1075 / NRRL 1951 / Wisconsin 54-1255) (Penicillium chrysogenum).